A 278-amino-acid chain; its full sequence is MSFRARLLAAERLNDSLLCVGLDPEPSKFPAPWTGDATRIFDFCARIVDATKDLVIAFKPQIAYFAAHRAEDQLERLMAYLRRVAPDVPVILDAKRGDIGSTAEQYAREAFERYQADAVTLSPFMGFDSVEPYLRWPGKGAILLCRTSNPGGSDLQNQRLADVDGTPRLYEHLAQLAQGPWNTNGQLGLVVGATFPEELARVRALAPTLPLLIPGVGAQGGDAAATVKAAWRGDKATTSAPIIVNSSRAVLYAGRDAEFASAARQVALATRAALNAAR.

Catalysis depends on Lys95, which acts as the Proton donor.

The protein belongs to the OMP decarboxylase family. Type 2 subfamily.

The catalysed reaction is orotidine 5'-phosphate + H(+) = UMP + CO2. Its pathway is pyrimidine metabolism; UMP biosynthesis via de novo pathway; UMP from orotate: step 2/2. This Methylibium petroleiphilum (strain ATCC BAA-1232 / LMG 22953 / PM1) protein is Orotidine 5'-phosphate decarboxylase.